The following is an 81-amino-acid chain: RNA-binding protein Hfq (81 aa).

In terms of domain architecture, Sm spans 10–70 (DLFLNSVRKS…ISTIMPSQPV (61 aa)).

It belongs to the Hfq family. As to quaternary structure, homohexamer.

In terms of biological role, RNA chaperone that binds small regulatory RNA (sRNAs) and mRNAs to facilitate mRNA translational regulation in response to envelope stress, environmental stress and changes in metabolite concentrations. Also binds with high specificity to tRNAs. In Mesorhizobium japonicum (strain LMG 29417 / CECT 9101 / MAFF 303099) (Mesorhizobium loti (strain MAFF 303099)), this protein is RNA-binding protein Hfq.